The following is a 1311-amino-acid chain: Kinase and exchange factor for Rac A (1311 aa).

The region spanning 18–316 is the Protein kinase domain; that stretch reads LVFKDIIGKG…STIVTILESI (299 aa). Residues 24-32 and Lys-45 contribute to the ATP site; that span reads IGKGNFGCV. Residue Asp-138 is the Proton acceptor of the active site. Disordered stretches follow at residues 169–201, 360–426, and 446–471; these read NGSD…KNNG, QQQS…TTTT, and PLSK…LIGS. The segment covering 451-471 has biased composition (low complexity); it reads QQQQQRNQNSSIIDNNSLIGS. The 30-residue stretch at 650 to 679 folds into the IQ domain; sequence ELNLIIKLQSRIRGWLVRRRYKIFLSNWKL. One can recognise a DH domain in the interval 691–927; the sequence is QWIRLFNQLI…RETSNYIQSQ (237 aa). Low complexity-rich tracts occupy residues 994–1021 and 1031–1044; these read SKYN…TNSN and STSN…GNNN. Disordered regions lie at residues 994–1044, 1114–1145, and 1208–1311; these read SKYN…GNNN, NNPN…NGSI, and GTST…FSKD. A compositionally biased stretch (gly residues) spans 1117-1137; it reads NGGGSNNNSIGGGGGGRGGSG. The segment covering 1208-1229 has biased composition (polar residues); it reads GTSTPERKTSLVNMSPSTTSSL. Low complexity predominate over residues 1230–1245; the sequence is NNIDSNYNNNNNNVTN. The segment covering 1246-1257 has biased composition (polar residues); it reads TPIKSVTSSPSI. The span at 1263–1276 shows a compositional bias: low complexity; sequence NDNNQQPQLPSQPN. Over residues 1277 to 1287 the composition is skewed to polar residues; sequence EEFQFTVPTTP. Residues 1290 to 1303 show a composition bias toward basic residues; it reads KKKKRGSFSSKLKR.

The protein belongs to the protein kinase superfamily. TKL Ser/Thr protein kinase family. The cofactor is Mg(2+).

It carries out the reaction L-seryl-[protein] + ATP = O-phospho-L-seryl-[protein] + ADP + H(+). The catalysed reaction is L-threonyl-[protein] + ATP = O-phospho-L-threonyl-[protein] + ADP + H(+). This is Kinase and exchange factor for Rac A (kxcA) from Dictyostelium discoideum (Social amoeba).